The following is a 587-amino-acid chain: V-type proton ATPase catalytic subunit A (587 aa).

Residue 243 to 250 coordinates ATP; the sequence is GAFGCGKT.

This sequence belongs to the ATPase alpha/beta chains family. As to quaternary structure, V-ATPase is a heteromultimeric enzyme composed of a peripheral catalytic V1 complex (main components: subunits A, B, C, D, E, and F) attached to an integral membrane V0 proton pore complex (main component: the proteolipid protein).

It catalyses the reaction ATP + H2O + 4 H(+)(in) = ADP + phosphate + 5 H(+)(out). Its function is as follows. Catalytic subunit of the peripheral V1 complex of vacuolar ATPase. V-ATPase vacuolar ATPase is responsible for acidifying a variety of intracellular compartments in eukaryotic cells. This chain is V-type proton ATPase catalytic subunit A, found in Cyanidium caldarium (Red alga).